The following is a 546-amino-acid chain: Glucose-6-phosphate isomerase (546 aa).

Glu-353 acts as the Proton donor in catalysis. Active-site residues include His-384 and Lys-512.

Belongs to the GPI family.

Its subcellular location is the cytoplasm. The catalysed reaction is alpha-D-glucose 6-phosphate = beta-D-fructose 6-phosphate. It participates in carbohydrate biosynthesis; gluconeogenesis. Its pathway is carbohydrate degradation; glycolysis; D-glyceraldehyde 3-phosphate and glycerone phosphate from D-glucose: step 2/4. Functionally, catalyzes the reversible isomerization of glucose-6-phosphate to fructose-6-phosphate. The sequence is that of Glucose-6-phosphate isomerase from Actinobacillus pleuropneumoniae serotype 3 (strain JL03).